Here is a 347-residue protein sequence, read N- to C-terminus: Phosphoribosylformylglycinamidine cyclo-ligase (347 aa).

The protein belongs to the AIR synthase family.

The protein localises to the cytoplasm. It carries out the reaction 2-formamido-N(1)-(5-O-phospho-beta-D-ribosyl)acetamidine + ATP = 5-amino-1-(5-phospho-beta-D-ribosyl)imidazole + ADP + phosphate + H(+). Its pathway is purine metabolism; IMP biosynthesis via de novo pathway; 5-amino-1-(5-phospho-D-ribosyl)imidazole from N(2)-formyl-N(1)-(5-phospho-D-ribosyl)glycinamide: step 2/2. This chain is Phosphoribosylformylglycinamidine cyclo-ligase, found in Prochlorococcus marinus (strain MIT 9215).